Consider the following 361-residue polypeptide: Velvet complex subunit B (361 aa).

Disordered stretches follow at residues 1 to 36 (MYAVEDRHHPVPPPLSMDRISAPSVQYPSGTTSLRQ) and 308 to 340 (NGAPVIEPHQSWPRFSLNPSRSSPPKSSPVLLR). Polar residues predominate over residues 23–35 (PSVQYPSGTTSLR). The Velvet domain maps to 47 to 353 (QDGRSWSLQV…SASALRYRVS (307 aa)). The span at 323 to 336 (SLNPSRSSPPKSSP) shows a compositional bias: low complexity.

It belongs to the velvet family. VelB subfamily. As to quaternary structure, component of the heterotrimeric velvet complex composed of laeA, veA and velB; VeA acting as a bridging protein between laeA and velB. Interacts with velA. Forms a heterodimeric complex with vosA; the formation of the velB-vosA complex is light-dependent. Interacts with vosA.

The protein localises to the nucleus. Its subcellular location is the cytoplasm. Functionally, component of the velvet transcription factor complex that controls sexual/asexual developmental ratio in response to light, promoting sexual development in the darkness while stimulating asexual sporulation under illumination. The velvet complex acts as a global regulator for secondary metabolite gene expression. Component of the velB-VosA heterodimeric complex that plays a dual role in activating genes associated with spore maturation and repressing certain development-associated genes. The velB-VosA complex binds DNA through the DNA-binding domain of vosA that recognizes an 11-nucleotide consensus sequence 5'-CTGGCCGCGGC-3' consisting of two motifs in the promoters of key developmental regulatory genes. Controls conidiophore formation. This is Velvet complex subunit B from Penicillium rubens (strain ATCC 28089 / DSM 1075 / NRRL 1951 / Wisconsin 54-1255) (Penicillium chrysogenum).